Here is a 290-residue protein sequence, read N- to C-terminus: ATP synthase gamma chain (290 aa).

This sequence belongs to the ATPase gamma chain family. F-type ATPases have 2 components, CF(1) - the catalytic core - and CF(0) - the membrane proton channel. CF(1) has five subunits: alpha(3), beta(3), gamma(1), delta(1), epsilon(1). CF(0) has three main subunits: a, b and c.

It localises to the cell membrane. Produces ATP from ADP in the presence of a proton gradient across the membrane. The gamma chain is believed to be important in regulating ATPase activity and the flow of protons through the CF(0) complex. The sequence is that of ATP synthase gamma chain from Listeria innocua serovar 6a (strain ATCC BAA-680 / CLIP 11262).